The chain runs to 249 residues: Methylthioribulose-1-phosphate dehydratase (249 aa).

Residues 1 to 25 (MVDIKPEQTQEGNNNDHLVQSDDPE) form a disordered region. Positions 9 to 18 (TQEGNNNDHL) are enriched in polar residues. Substrate is bound at residue Cys105. Residues His122 and His124 each contribute to the Zn(2+) site. Glu151 functions as the Proton donor/acceptor in the catalytic mechanism. His207 lines the Zn(2+) pocket.

This sequence belongs to the aldolase class II family. MtnB subfamily. Zn(2+) serves as cofactor.

Its subcellular location is the cytoplasm. The catalysed reaction is 5-(methylsulfanyl)-D-ribulose 1-phosphate = 5-methylsulfanyl-2,3-dioxopentyl phosphate + H2O. Its pathway is amino-acid biosynthesis; L-methionine biosynthesis via salvage pathway; L-methionine from S-methyl-5-thio-alpha-D-ribose 1-phosphate: step 2/6. Functionally, catalyzes the dehydration of methylthioribulose-1-phosphate (MTRu-1-P) into 2,3-diketo-5-methylthiopentyl-1-phosphate (DK-MTP-1-P). In Arthroderma otae (strain ATCC MYA-4605 / CBS 113480) (Microsporum canis), this protein is Methylthioribulose-1-phosphate dehydratase.